The primary structure comprises 452 residues: Regulatory protein E2 (452 aa).

The segment at 1 to 201 is transactivation domain; it reads MDNLSERFNV…DTIFAPVTSS (201 aa). The segment at 198–356 is disordered; the sequence is VTSSSPAAGE…SVRSVGRNPG (159 aa). Positions 227 to 239 are enriched in low complexity; it reads SATSVSTRTTQRT. The segment covering 256–270 has biased composition (basic residues); that stretch reads TRHKRQDIRRSRSTS. A compositionally biased stretch (low complexity) spans 309–319; sequence GPTTRSQSRSL. Residues 320–330 show a composition bias toward basic residues; sequence SRSRSRSRSRS. The interval 368 to 452 is DNA-binding domain; it reads DPPVILLRGE…DWSLGHLDDL (85 aa).

This sequence belongs to the papillomaviridae E2 protein family. In terms of assembly, binds DNA as homodimer. Interacts with protein E1; this interaction greatly increases E1 DNA-binding activity. Interacts with protein L1; this interaction enhances E2-dependent replication and transcription activation. Interacts with protein L2; this interaction inhibits E2 transcriptional activity but not DNA replication function E2. Interacts with protein E7; this interaction inhibits E7 oncogenic activity. Interacts with host TAF1; this interaction modulates E2-dependent transcriptional regulation. Interacts with host BRD4; this interaction mediates E2 transcriptional activation function. Additionally, the interaction with host BRD4 on mitotic chromosomes mediates tethering of the viral genome. Interacts with host TOPBP1; this interaction is required for optimal viral DNA replication. In terms of processing, phosphorylated.

Its subcellular location is the host nucleus. In terms of biological role, plays a role in the initiation of viral DNA replication. A dimer of E2 interacts with a dimer of E1 in order to improve specificity of E1 DNA binding activity. Once the complex recognizes and binds DNA at specific sites, the E2 dimer is removed from DNA. E2 also regulates viral transcription through binding to the E2RE response element (5'-ACCNNNNNNGGT-3') present in multiple copies in the regulatory regions of the viral genome. Activates or represses transcription depending on E2RE's position with regards to proximal promoter elements including the TATA-box. Repression occurs by sterically hindering the assembly of the transcription initiation complex. In Human papillomavirus 17, this protein is Regulatory protein E2.